A 500-amino-acid chain; its full sequence is Na(+)/H(+) antiporter NhaB (500 aa).

12 consecutive transmembrane segments (helical) span residues F28–G50, G68–A88, L98–F118, L121–L141, F145–V165, L205–P225, Q244–E264, V311–I331, F350–I370, M394–I414, V449–L469, and M477–S497.

This sequence belongs to the NhaB Na(+)/H(+) (TC 2.A.34) antiporter family.

Its subcellular location is the cell inner membrane. It carries out the reaction 2 Na(+)(in) + 3 H(+)(out) = 2 Na(+)(out) + 3 H(+)(in). Na(+)/H(+) antiporter that extrudes sodium in exchange for external protons. This Pseudomonas aeruginosa (strain UCBPP-PA14) protein is Na(+)/H(+) antiporter NhaB.